A 370-amino-acid polypeptide reads, in one-letter code: Integrin-linked kinase-associated serine/threonine phosphatase 2C (370 aa).

An N-acetylmethionine modification is found at methionine 1. The interval 1-69 is disordered; sequence MDLFGDLPEP…SDEEKNGSEE (69 aa). Serine 13 carries the phosphoserine modification. Residues 33–45 are compositionally biased toward low complexity; that stretch reads SSGDSGSLDTSLS. A compositionally biased stretch (basic and acidic residues) spans 46–69; that stretch reads EEVKNEGKGAKRKASDEEKNGSEE. In terms of domain architecture, PPM-type phosphatase spans 86–368; sequence KGYVAERKGE…DNVTVMVVRI (283 aa). Residues aspartate 130 and glycine 131 each contribute to the Mn(2+) site. An N6-acetyllysine modification is found at lysine 188. 2 residues coordinate Mn(2+): aspartate 304 and aspartate 359.

This sequence belongs to the PP2C family. As to quaternary structure, interacts with ILK. Mg(2+) serves as cofactor. It depends on Mn(2+) as a cofactor.

The protein localises to the cytoplasm. It catalyses the reaction O-phospho-L-seryl-[protein] + H2O = L-seryl-[protein] + phosphate. The catalysed reaction is O-phospho-L-threonyl-[protein] + H2O = L-threonyl-[protein] + phosphate. In terms of biological role, protein phosphatase that may play a role in regulation of cell cycle progression via dephosphorylation of its substrates whose appropriate phosphorylation states might be crucial for cell proliferation. Selectively associates with integrin linked kinase (ILK), to modulate cell adhesion and growth factor signaling. Inhibits the ILK-GSK3B signaling axis and may play an important role in inhibiting oncogenic transformation. This is Integrin-linked kinase-associated serine/threonine phosphatase 2C (ILKAP) from Bos taurus (Bovine).